A 316-amino-acid polypeptide reads, in one-letter code: Aspartate carbamoyltransferase catalytic subunit (316 aa).

Residues R66 and T67 each coordinate carbamoyl phosphate. L-aspartate is bound at residue K94. Carbamoyl phosphate is bound by residues R116, H146, and Q149. L-aspartate-binding residues include R179 and R234. G275 and P276 together coordinate carbamoyl phosphate.

This sequence belongs to the aspartate/ornithine carbamoyltransferase superfamily. ATCase family. In terms of assembly, heterododecamer (2C3:3R2) of six catalytic PyrB chains organized as two trimers (C3), and six regulatory PyrI chains organized as three dimers (R2).

The catalysed reaction is carbamoyl phosphate + L-aspartate = N-carbamoyl-L-aspartate + phosphate + H(+). It participates in pyrimidine metabolism; UMP biosynthesis via de novo pathway; (S)-dihydroorotate from bicarbonate: step 2/3. In terms of biological role, catalyzes the condensation of carbamoyl phosphate and aspartate to form carbamoyl aspartate and inorganic phosphate, the committed step in the de novo pyrimidine nucleotide biosynthesis pathway. This is Aspartate carbamoyltransferase catalytic subunit from Nitrosomonas eutropha (strain DSM 101675 / C91 / Nm57).